The sequence spans 208 residues: High frequency lysogenization protein HflD homolog (208 aa).

This sequence belongs to the HflD family.

The protein localises to the cytoplasm. The protein resides in the cell inner membrane. The sequence is that of High frequency lysogenization protein HflD homolog from Pseudomonas entomophila (strain L48).